Reading from the N-terminus, the 936-residue chain is Coiled-coil domain-containing protein 191 (936 aa).

Coiled-coil stretches lie at residues 189 to 270 (RLTM…VKAA) and 364 to 440 (RDYT…LQAA). The interval 495-541 (LGRTTTGNLQGSLQNVSLSAPGNKQHKTLGAEPSQQPGSNETLRTTS) is disordered. Polar residues-rich tracts occupy residues 497–516 (RTTTGNLQGSLQNVSLSAPG) and 527–541 (PSQQPGSNETLRTTS). Residues 554–592 (NRHVFQQQLIEKQKKKLQEQQKTILELKKNLQLAEAQWA) adopt a coiled-coil conformation. Disordered stretches follow at residues 607-656 (LSKP…TPHP) and 691-714 (KAQEEERQKREAEEKEAQLERKRE). A coiled-coil region spans residues 662 to 739 (EERAIQRAEC…IKRNQQLEAI (78 aa)).

The protein is Coiled-coil domain-containing protein 191 (CCDC191) of Homo sapiens (Human).